A 201-amino-acid polypeptide reads, in one-letter code: 3-isopropylmalate dehydratase small subunit (201 aa).

It belongs to the LeuD family. LeuD type 1 subfamily. As to quaternary structure, heterodimer of LeuC and LeuD.

It carries out the reaction (2R,3S)-3-isopropylmalate = (2S)-2-isopropylmalate. The protein operates within amino-acid biosynthesis; L-leucine biosynthesis; L-leucine from 3-methyl-2-oxobutanoate: step 2/4. In terms of biological role, catalyzes the isomerization between 2-isopropylmalate and 3-isopropylmalate, via the formation of 2-isopropylmaleate. This Chloroflexus aurantiacus (strain ATCC 29366 / DSM 635 / J-10-fl) protein is 3-isopropylmalate dehydratase small subunit.